The sequence spans 216 residues: Glycerol uptake facilitator protein-like 6 (216 aa).

A run of 2 helical transmembrane segments spans residues 5–25 (LAEF…VVIA) and 30–50 (LAIG…FGGI). The NPA 1 motif lies at 56-58 (NPA). The next 3 helical transmembrane spans lie at 72–92 (ADAI…SAAV), 114–134 (IGSG…LMVI), and 147–167 (FAGL…LNLT). Positions 172-174 (NPA) match the NPA 2 motif. Residues 191–213 (LWVYILAPEVGAILAAFCARVMG) traverse the membrane as a helical segment.

Belongs to the MIP/aquaporin (TC 1.A.8) family.

The protein resides in the cell membrane. In terms of biological role, probable transporter that facilitates the transmembrane diffusion of an unknown substrate. Is not permeable to water, dihydroxyacetone, glycerol, urea, H(2)O(2) and D/L-lactic acid. The polypeptide is Glycerol uptake facilitator protein-like 6 (Lactiplantibacillus plantarum (strain ATCC BAA-793 / NCIMB 8826 / WCFS1) (Lactobacillus plantarum)).